Consider the following 148-residue polypeptide: Nucleoside diphosphate kinase A (148 aa).

Positions 9, 57, 85, 91, 102, and 112 each coordinate ATP. Catalysis depends on H115, which acts as the Pros-phosphohistidine intermediate.

The protein belongs to the NDK family. The cofactor is Mg(2+).

It catalyses the reaction a 2'-deoxyribonucleoside 5'-diphosphate + ATP = a 2'-deoxyribonucleoside 5'-triphosphate + ADP. The enzyme catalyses a ribonucleoside 5'-diphosphate + ATP = a ribonucleoside 5'-triphosphate + ADP. Major role in the synthesis of nucleoside triphosphates other than ATP. The ATP gamma phosphate is transferred to the NDP beta phosphate via a ping-pong mechanism, using a phosphorylated active-site intermediate. The chain is Nucleoside diphosphate kinase A from Flaveria bidentis (Coastal plain yellowtops).